The following is a 209-amino-acid chain: Segregation and condensation protein B (209 aa).

It belongs to the ScpB family. As to quaternary structure, homodimer. Homodimerization may be required to stabilize the binding of ScpA to the Smc head domains. Component of a cohesin-like complex composed of ScpA, ScpB and the Smc homodimer, in which ScpA and ScpB bind to the head domain of Smc. The presence of the three proteins is required for the association of the complex with DNA.

It localises to the cytoplasm. In terms of biological role, participates in chromosomal partition during cell division. May act via the formation of a condensin-like complex containing Smc and ScpA that pull DNA away from mid-cell into both cell halves. The chain is Segregation and condensation protein B from Geobacillus thermodenitrificans (strain NG80-2).